The following is a 589-amino-acid chain: ATP-dependent lipid A-core flippase (589 aa).

The next 5 membrane-spanning stretches (helical) occupy residues 29–49 (WLLV…STFL), 68–88 (ALWL…AGYI), 157–177 (VIGA…AILL), 254–274 (LSSA…LLIA), and 283–303 (LSPG…PALK). The region spanning 32 to 314 (VVAACGALLE…LTNVQNMLQS (283 aa)) is the ABC transmembrane type-1 domain. The region spanning 346 to 582 (IEFRGITARY…DGLYAYLYSM (237 aa)) is the ABC transporter domain. Position 380–387 (380–387 (GRSGSGKS)) interacts with ATP.

It belongs to the ABC transporter superfamily. Lipid exporter (TC 3.A.1.106) family. As to quaternary structure, homodimer.

Its subcellular location is the cell inner membrane. The enzyme catalyses ATP + H2O + lipid A-core oligosaccharideSide 1 = ADP + phosphate + lipid A-core oligosaccharideSide 2.. Its function is as follows. Involved in lipopolysaccharide (LPS) biosynthesis. Translocates lipid A-core from the inner to the outer leaflet of the inner membrane. Transmembrane domains (TMD) form a pore in the inner membrane and the ATP-binding domain (NBD) is responsible for energy generation. This chain is ATP-dependent lipid A-core flippase, found in Xylella fastidiosa (strain 9a5c).